A 573-amino-acid chain; its full sequence is Protein DSE1 (573 aa).

WD repeat units follow at residues Asp144–Lys185, Arg315–Val351, Ala356–Tyr395, and Glu397–Gly448. Residues Ser500 to Asn509 are compositionally biased toward low complexity. The tract at residues Ser500–Ser519 is disordered. A Glycyl lysine isopeptide (Lys-Gly) (interchain with G-Cter in ubiquitin) cross-link involves residue Lys553.

The protein belongs to the WD repeat DSE1 family.

The protein resides in the bud neck. Involved in cell wall metabolism and required for the separation of the mother and daughter cells. The polypeptide is Protein DSE1 (DSE1) (Saccharomyces cerevisiae (strain ATCC 204508 / S288c) (Baker's yeast)).